Reading from the N-terminus, the 563-residue chain is Tripeptidyl-peptidase 1 (563 aa).

Positions 1–19 are cleaved as a signal peptide; that stretch reads MGLQACLLGLFALILSGKC. Residues 20–195 constitute a propeptide, removed in mature form; the sequence is SYSPEPDQRR…PEPQVTGTVG (176 aa). The cysteines at positions 111 and 122 are disulfide-linked. Residues 199–563 enclose the Peptidase S53 domain; the sequence is GVTPSVIRKR…PALLKTLLNP (365 aa). N-linked (GlcNAc...) asparagine glycans are attached at residues Asn210 and Asn222. Catalysis depends on charge relay system residues Glu272 and Asp276. Residues Asn286, Asn313, and Asn443 are each glycosylated (N-linked (GlcNAc...) asparagine). 2 disulfides stabilise this stretch: Cys365-Cys526 and Cys522-Cys537. Residue Ser475 is the Charge relay system of the active site. Ca(2+) contacts are provided by Asp517 and Val518. Residues Gly539, Gly541, and Asp543 each coordinate Ca(2+).

In terms of assembly, monomer. Interacts with CLN5. Interacts with CLN3. The cofactor is Ca(2+). In terms of processing, activated by autocatalytic proteolytical processing upon acidification. N-glycosylation is required for processing and activity.

The protein resides in the lysosome. Its subcellular location is the melanosome. It carries out the reaction Release of an N-terminal tripeptide from a polypeptide, but also has endopeptidase activity.. Its function is as follows. Lysosomal serine protease with tripeptidyl-peptidase I activity. May act as a non-specific lysosomal peptidase which generates tripeptides from the breakdown products produced by lysosomal proteinases. Requires substrates with an unsubstituted N-terminus. In Macaca fascicularis (Crab-eating macaque), this protein is Tripeptidyl-peptidase 1 (TPP1).